The following is an 804-amino-acid chain: DNA mismatch repair protein MutS (804 aa).

614-621 (GPNMAGKS) contributes to the ATP binding site.

This sequence belongs to the DNA mismatch repair MutS family.

Its function is as follows. This protein is involved in the repair of mismatches in DNA. It is possible that it carries out the mismatch recognition step. This protein has a weak ATPase activity. The polypeptide is DNA mismatch repair protein MutS (Ehrlichia ruminantium (strain Welgevonden)).